Reading from the N-terminus, the 201-residue chain is Large ribosomal subunit protein bL25 (201 aa).

It belongs to the bacterial ribosomal protein bL25 family. CTC subfamily. Part of the 50S ribosomal subunit; part of the 5S rRNA/L5/L18/L25 subcomplex. Contacts the 5S rRNA. Binds to the 5S rRNA independently of L5 and L18.

In terms of biological role, this is one of the proteins that binds to the 5S RNA in the ribosome where it forms part of the central protuberance. The chain is Large ribosomal subunit protein bL25 from Aromatoleum aromaticum (strain DSM 19018 / LMG 30748 / EbN1) (Azoarcus sp. (strain EbN1)).